Reading from the N-terminus, the 394-residue chain is Elongation factor Tu (394 aa).

In terms of domain architecture, tr-type G spans 10-204 (KPHINVGTIG…FLDTYIPEPK (195 aa)). A G1 region spans residues 19–26 (GHVDHGKT). 19–26 (GHVDHGKT) lines the GTP pocket. Residue threonine 26 coordinates Mg(2+). Positions 60 to 64 (GITIN) are G2. The G3 stretch occupies residues 81-84 (DCPG). GTP contacts are provided by residues 81-85 (DCPGH) and 136-139 (NKCD). The G4 stretch occupies residues 136-139 (NKCD). The G5 stretch occupies residues 174–176 (SAL).

The protein belongs to the TRAFAC class translation factor GTPase superfamily. Classic translation factor GTPase family. EF-Tu/EF-1A subfamily. In terms of assembly, monomer.

Its subcellular location is the cytoplasm. It catalyses the reaction GTP + H2O = GDP + phosphate + H(+). GTP hydrolase that promotes the GTP-dependent binding of aminoacyl-tRNA to the A-site of ribosomes during protein biosynthesis. The chain is Elongation factor Tu from Buchnera aphidicola subsp. Schizaphis graminum (strain Sg).